Consider the following 868-residue polypeptide: Translation initiation factor IF-2 (868 aa).

2 stretches are compositionally biased toward basic and acidic residues: residues 156–166 (ETVKEEEKINS) and 199–209 (SKKEEVKPEKV). Disordered stretches follow at residues 156–177 (ETVK…QDEL) and 199–269 (SKKE…KYRE). Over residues 249–260 (RGGRSKFKKKKG) the composition is skewed to basic residues. In terms of domain architecture, tr-type G spans 368 to 537 (GRAPVVTIMG…LLQSEVLELK (170 aa)). Residues 377–384 (GHVDHGKT) are G1. A GTP-binding site is contributed by 377-384 (GHVDHGKT). The interval 402 to 406 (GITQH) is G2. The interval 423 to 426 (DTPG) is G3. Residues 423-427 (DTPGH) and 477-480 (NKMD) contribute to the GTP site. Positions 477–480 (NKMD) are G4. The tract at residues 513–515 (SAK) is G5.

It belongs to the TRAFAC class translation factor GTPase superfamily. Classic translation factor GTPase family. IF-2 subfamily.

It localises to the cytoplasm. Its function is as follows. One of the essential components for the initiation of protein synthesis. Protects formylmethionyl-tRNA from spontaneous hydrolysis and promotes its binding to the 30S ribosomal subunits. Also involved in the hydrolysis of GTP during the formation of the 70S ribosomal complex. The polypeptide is Translation initiation factor IF-2 (Legionella pneumophila subsp. pneumophila (strain Philadelphia 1 / ATCC 33152 / DSM 7513)).